The sequence spans 230 residues: MTTLTARPEAITFDPQQSALIVVDMQNAYATPGGYLDLAGFDVSTTRPVIANIQTAVTAARAAGMLIIWFQNGWDEQYVEAGGPGSPNFHKSNALKTMRKQPQLQGKLLAKGSWDYQLVDELVPQPGDIVLPKPRYSGFFNTPLDSILRSRGIRHLVFTGIATNVCVESTLRDGFFLEYFGVVLEDATHQAGPEFAQKAALFNIETFFGWVSDVETFCDALSPTSFARIA.

D24 (proton acceptor) is an active-site residue. K133 is an active-site residue. C166 functions as the Nucleophile in the catalytic mechanism.

The protein belongs to the isochorismatase family. RutB subfamily.

The enzyme catalyses (Z)-3-ureidoacrylate + H2O + H(+) = (Z)-3-aminoacrylate + NH4(+) + CO2. It carries out the reaction (Z)-3-ureidoacrylate + H2O = (Z)-3-aminoacrylate + carbamate + H(+). It catalyses the reaction (Z)-2-methylureidoacrylate + H2O + H(+) = (Z)-2-methylaminoacrylate + NH4(+) + CO2. Hydrolyzes ureidoacrylate to form aminoacrylate and carbamate. The carbamate hydrolyzes spontaneously, thereby releasing one of the nitrogen atoms of the pyrimidine ring as ammonia and one of its carbon atoms as CO2. This Escherichia coli O111:H- (strain 11128 / EHEC) protein is Ureidoacrylate amidohydrolase RutB.